The following is a 951-amino-acid chain: Plasma membrane ATPase (951 aa).

4 consecutive transmembrane segments (helical) span residues 61 to 81 (FLGFMWNPLSWVMEMAAIMAI), 93 to 113 (WEDFVGIIVLLVINSTISFIE), 243 to 263 (IGNFCICSIAVGIVIEIIVMF), and 277 to 297 (LLVLLIGGIPIAMPTVLSVTM). The active-site 4-aspartylphosphate intermediate is the Asp-329. Asp-588 and Asp-592 together coordinate Mg(2+). The next 6 membrane-spanning stretches (helical) occupy residues 647-667 (IYAVSITIRIVLGFLLIALIW), 671-691 (FSPFMVLIIAILNDGTIMTIS), 709-729 (IFATGIVLGSYLALMTVIFFW), 752-772 (EMMSALYLQVSIVSQALIFVT), 785-805 (LLLVTAFMLAQLVATFLAVYA), and 814-834 (GIGWGWAGVIWLYSIVFYFPL).

The protein belongs to the cation transport ATPase (P-type) (TC 3.A.3) family. Type IIIA subfamily.

The protein resides in the cell membrane. The enzyme catalyses ATP + H2O + H(+)(in) = ADP + phosphate + 2 H(+)(out). Functionally, the plasma membrane ATPase of plants and fungi is a hydrogen ion pump. The proton gradient it generates drives the active transport of nutrients by H(+)-symport. The resulting external acidification and/or internal alkinization may mediate growth responses. This chain is Plasma membrane ATPase, found in Oryza sativa subsp. japonica (Rice).